Reading from the N-terminus, the 277-residue chain is Undecaprenyl-diphosphatase (277 aa).

A run of 8 helical transmembrane segments spans residues 1 to 21 (MDIIQAIIIGIVQGLTEFLPV), 38 to 58 (SSLAFDVFLHLGSLIAVLWFF), 93 to 113 (LVWYVIIATIPVGLVGVLFES), 118 to 138 (LFAGALYVPAFFLFVTGTILY), 168 to 188 (AILPGLSRSGTTIAAGLVIGL), 191 to 211 (EFAAKFSFILSIPAILGAFVV), 222 to 242 (FNALAILFGFLAALISGYLAI), and 256 to 276 (IFAYYCWIVGIIVFMGSITHL).

Belongs to the UppP family.

The protein resides in the cell membrane. The catalysed reaction is di-trans,octa-cis-undecaprenyl diphosphate + H2O = di-trans,octa-cis-undecaprenyl phosphate + phosphate + H(+). Its function is as follows. Catalyzes the dephosphorylation of undecaprenyl diphosphate (UPP). This is Undecaprenyl-diphosphatase from Methanobrevibacter smithii (strain ATCC 35061 / DSM 861 / OCM 144 / PS).